Consider the following 804-residue polypeptide: Endoplasmin (804 aa).

Residues 1 to 21 (MRALWVLGLCCVLLTFGSVRA) form the signal peptide. An SRT pseudosubstrate motif motif is present at residues 42–44 (SRT). A glycan (N-linked (GlcNAc...) asparagine) is linked at asparagine 62. Serine 64 carries the phosphoserine modification. N-linked (GlcNAc...) asparagine glycosylation is present at asparagine 107. The ATP site is built by asparagine 107, aspartate 149, and asparagine 162. Lysine 168 is subject to N6-(2-hydroxyisobutyryl)lysine. Phosphoserine is present on serine 172. Phenylalanine 199 serves as a coordination point for ATP. A glycan (N-linked (GlcNAc...) asparagine) is linked at asparagine 217. Positions 288–323 (TVEEPAEEEEAAKEDKEESDDEAAVEEEEDEKKPKT) are disordered. Acidic residues predominate over residues 289–317 (VEEPAEEEEAAKEDKEESDDEAAVEEEED). Residues serine 306 and serine 403 each carry the phosphoserine modification. Position 404 is an N6-succinyllysine (lysine 404). Asparagine 445 carries an N-linked (GlcNAc...) asparagine glycan. The residue at position 447 (serine 447) is a Phosphoserine. Lysine 479 is modified (N6-acetyllysine). N-linked (GlcNAc...) asparagine glycosylation is found at asparagine 481 and asparagine 502. Position 633 is an N6-succinyllysine (lysine 633). Positions 750–804 (DPDAKVEEEPEEEPEETTEDTAEDTEQDEEEEMDAGTDEEEQETAEKSTAEKDEL) are disordered. The segment covering 757–792 (EEPEEEPEETTEDTAEDTEQDEEEEMDAGTDEEEQE) has biased composition (acidic residues). Position 786 is a phosphothreonine (threonine 786). Over residues 793–804 (TAEKSTAEKDEL) the composition is skewed to basic and acidic residues. The short motif at 801 to 804 (KDEL) is the Prevents secretion from ER element.

It belongs to the heat shock protein 90 family. As to quaternary structure, homodimer; disulfide-linked. Component of an EIF2 complex at least composed of CELF1/CUGBP1, CALR, CALR3, EIF2S1, EIF2S2, HSP90B1 and HSPA5. Part of a large chaperone multiprotein complex comprising DNAJB11, HSP90B1, HSPA5, HYOU, PDIA2, PDIA4, PDIA6, PPIB, SDF2L1, UGGT1 and very small amounts of ERP29, but not, or at very low levels, CALR nor CANX. Interacts with AIMP1; regulates its retention in the endoplasmic reticulum. Hyperglycosylated form interacts with OS9; promoting its degradation by the endoplasmic reticulum associated degradation (ERAD). Interacts with CNPY3. This interaction is disrupted in the presence of ATP. Interacts with TLR4 and TLR9, but not with TLR3. Interacts with MZB1 in a calcium-dependent manner. Interacts with METTL23. Interacts with IL1B; the interaction facilitates cargo translocation into the ERGIC. Interacts with EIF2AK3. Phosphorylated by CK2. Post-translationally, N-glycosylated cotranslationally at Asn-217 by STT3A-containing OST-A complex: this glycosylation is constitutive. In response to various stress, 5 additional facultative sites (Asn-62, Asn-107, Asn-445, Asn-481 and Asn-502) can be glycosylated post-translationally by STT3B-containing OST-B complex, leading to a hyperglycosylated form that is degraded by the ER-associated degradation (ERAD) pathway. In normal conditions, the OST-A complex together with CCDC134 prevent glycosylation at facultative sites during protein folding, thereby preventing hyperglycosylation. Mechanistically, nascent HSP90B1 is tethered during translation to a specialized CCDC134-containing translocon that forms a microenvironment for its folding, in which STT3A associates with the SRT pseudosubstrate motif, and prevents access to facultative glycosylation sites until folding is completed, rendering its facultative sites inaccessible to the OST-B complex.

Its subcellular location is the endoplasmic reticulum lumen. The protein resides in the sarcoplasmic reticulum lumen. It localises to the melanosome. It carries out the reaction ATP + H2O = ADP + phosphate + H(+). In terms of biological role, ATP-dependent chaperone involved in the processing of proteins in the endoplasmic reticulum, regulating their transport. Together with MESD, acts as a modulator of the Wnt pathway by promoting the folding of LRP6, a coreceptor of the canonical Wnt pathway. When associated with CNPY3, required for proper folding of Toll-like receptors. Promotes folding and trafficking of TLR4 to the cell surface. May participate in the unfolding of cytosolic leaderless cargos (lacking the secretion signal sequence) such as the interleukin 1/IL-1 to facilitate their translocation into the ERGIC (endoplasmic reticulum-Golgi intermediate compartment) and secretion; the translocation process is mediated by the cargo receptor TMED10. The sequence is that of Endoplasmin (HSP90B1) from Bos taurus (Bovine).